Here is a 123-residue protein sequence, read N- to C-terminus: Small ribosomal subunit protein uS13 (123 aa).

A disordered region spans residues 97–123 (PVRGQRTKTNARTRKGPRKTVGVRRKK).

This sequence belongs to the universal ribosomal protein uS13 family. Part of the 30S ribosomal subunit. Forms a loose heterodimer with protein S19. Forms two bridges to the 50S subunit in the 70S ribosome.

Its function is as follows. Located at the top of the head of the 30S subunit, it contacts several helices of the 16S rRNA. In the 70S ribosome it contacts the 23S rRNA (bridge B1a) and protein L5 of the 50S subunit (bridge B1b), connecting the 2 subunits; these bridges are implicated in subunit movement. Contacts the tRNAs in the A and P-sites. In Pelotomaculum thermopropionicum (strain DSM 13744 / JCM 10971 / SI), this protein is Small ribosomal subunit protein uS13.